A 547-amino-acid chain; its full sequence is Chaperonin GroEL 1 (547 aa).

ATP contacts are provided by residues 30-33, Lys-51, 87-91, Gly-415, and Asp-494; these read TLGP and DGTTT. The interval 524-547 is disordered; it reads PKGKAKGGGAGAGMPDYGGDDMDY.

This sequence belongs to the chaperonin (HSP60) family. As to quaternary structure, forms a cylinder of 14 subunits composed of two heptameric rings stacked back-to-back. Interacts with the co-chaperonin GroES.

It is found in the cytoplasm. It carries out the reaction ATP + H2O + a folded polypeptide = ADP + phosphate + an unfolded polypeptide.. Its function is as follows. Together with its co-chaperonin GroES, plays an essential role in assisting protein folding. The GroEL-GroES system forms a nano-cage that allows encapsulation of the non-native substrate proteins and provides a physical environment optimized to promote and accelerate protein folding. The protein is Chaperonin GroEL 1 of Myxococcus xanthus (strain DK1622).